A 345-amino-acid polypeptide reads, in one-letter code: Phenylalanine--tRNA ligase alpha subunit (345 aa).

Mg(2+) is bound at residue Glu-255.

It belongs to the class-II aminoacyl-tRNA synthetase family. Phe-tRNA synthetase alpha subunit type 1 subfamily. Tetramer of two alpha and two beta subunits. The cofactor is Mg(2+).

The protein localises to the cytoplasm. It carries out the reaction tRNA(Phe) + L-phenylalanine + ATP = L-phenylalanyl-tRNA(Phe) + AMP + diphosphate + H(+). The protein is Phenylalanine--tRNA ligase alpha subunit of Lysinibacillus sphaericus (strain C3-41).